Reading from the N-terminus, the 419-residue chain is Napsin-A (419 aa).

The N-terminal stretch at 1–16 (MSPLLLLLLCLLLGNL) is a signal peptide. A Peptidase A1 domain is found at 73–394 (YFGTIGLGTP…KNVGPRVGLA (322 aa)). Asparagine 85 is a glycosylation site (N-linked (GlcNAc...) asparagine). Aspartate 91 is an active-site residue. An intrachain disulfide couples cysteine 104 to cysteine 111. N-linked (GlcNAc...) asparagine glycosylation is found at asparagine 128 and asparagine 149. Cysteine 269 and cysteine 273 form a disulfide bridge. The active site involves aspartate 278. Cysteines 312 and 349 form a disulfide. The N-linked (GlcNAc...) asparagine glycan is linked to asparagine 331. The segment at 391–419 (VGLARAQSRSTDRAERRTTQAQFFKRRPG) is disordered.

The protein belongs to the peptidase A1 family. Expressed at the highest levels in the kidney, at a moderate level in the lung, and at low levels in the spleen and adipose tissue.

It is found in the secreted. Its function is as follows. May be involved in processing of pneumocyte surfactant precursors. The chain is Napsin-A (Napsa) from Mus musculus (Mouse).